Consider the following 780-residue polypeptide: Acetyl-CoA decarbonylase/synthase complex subunit alpha (780 aa).

The [4Fe-4S] cluster site is built by cysteine 73, cysteine 76, cysteine 77, cysteine 79, cysteine 84, and cysteine 93. Residue histidine 116 participates in CO binding. 3 residues coordinate [Ni-4Fe-4S] cluster: histidine 250, cysteine 278, and cysteine 317. 2 consecutive 4Fe-4S ferredoxin-type domains span residues 399–429 and 440–469; these read IDEI…MDAV and LEEM…VSMV. 8 residues coordinate [4Fe-4S] cluster: cysteine 409, cysteine 412, cysteine 415, cysteine 419, cysteine 449, cysteine 452, cysteine 455, and cysteine 459. [Ni-4Fe-4S] cluster-binding residues include cysteine 517, cysteine 546, and cysteine 581.

The protein belongs to the Ni-containing carbon monoxide dehydrogenase family. As to quaternary structure, heterotetramer of two alpha and two epsilon subunits. The ACDS complex is made up of alpha, epsilon, beta, gamma and delta subunits with a probable stoichiometry of (alpha(2)epsilon(2))(4)-beta(8)-(gamma(1)delta(1))(8). [4Fe-4S] cluster is required as a cofactor. The cofactor is [Ni-4Fe-4S] cluster.

It carries out the reaction CO + 2 oxidized [2Fe-2S]-[ferredoxin] + H2O = 2 reduced [2Fe-2S]-[ferredoxin] + CO2 + 2 H(+). Functionally, part of the ACDS complex that catalyzes the reversible cleavage of acetyl-CoA, allowing autotrophic growth from CO(2). The alpha-epsilon subcomponent functions as a carbon monoxide dehydrogenase. The sequence is that of Acetyl-CoA decarbonylase/synthase complex subunit alpha from Methanothermobacter thermautotrophicus (strain ATCC 29096 / DSM 1053 / JCM 10044 / NBRC 100330 / Delta H) (Methanobacterium thermoautotrophicum).